The chain runs to 102 residues: Glutaredoxin (102 aa).

One can recognise a Glutaredoxin domain in the interval 3 to 102; the sequence is MTKTKELVSS…VPLLTEAGAV (100 aa). The cysteines at positions 23 and 26 are disulfide-linked.

Belongs to the glutaredoxin family. CPYC subfamily.

The protein localises to the cytoplasm. Has a glutathione-disulfide oxidoreductase activity in the presence of NADPH and glutathione reductase. Reduces low molecular weight disulfides and proteins. The sequence is that of Glutaredoxin from Ricinus communis (Castor bean).